Reading from the N-terminus, the 476-residue chain is Probable cytosolic Fe-S cluster assembly factor GI11683 (476 aa).

The [4Fe-4S] cluster site is built by Cys-23, Cys-68, Cys-71, Cys-74, Cys-187, Cys-243, Cys-395, and Cys-399.

The protein belongs to the NARF family.

Functionally, component of the cytosolic iron-sulfur (Fe/S) protein assembly machinery. Required for maturation of extramitochondrial Fe/S proteins. The protein is Probable cytosolic Fe-S cluster assembly factor GI11683 of Drosophila mojavensis (Fruit fly).